The sequence spans 502 residues: Glycerol kinase (502 aa).

Thr13 serves as a coordination point for ADP. ATP-binding residues include Thr13, Thr14, and Ser15. Thr13 contributes to the sn-glycerol 3-phosphate binding site. ADP is bound at residue Arg17. Residues Arg83, Glu84, Tyr135, and Asp245 each coordinate sn-glycerol 3-phosphate. Arg83, Glu84, Tyr135, Asp245, and Gln246 together coordinate glycerol. Positions 267 and 310 each coordinate ADP. ATP-binding residues include Thr267, Gly310, Gln314, and Gly411. ADP-binding residues include Gly411 and Asn415.

This sequence belongs to the FGGY kinase family. As to quaternary structure, homotetramer and homodimer (in equilibrium).

The enzyme catalyses glycerol + ATP = sn-glycerol 3-phosphate + ADP + H(+). It participates in polyol metabolism; glycerol degradation via glycerol kinase pathway; sn-glycerol 3-phosphate from glycerol: step 1/1. Its activity is regulated as follows. Activated by phosphorylation and inhibited by fructose 1,6-bisphosphate (FBP). In terms of biological role, key enzyme in the regulation of glycerol uptake and metabolism. Catalyzes the phosphorylation of glycerol to yield sn-glycerol 3-phosphate. This is Glycerol kinase from Lactobacillus delbrueckii subsp. bulgaricus (strain ATCC BAA-365 / Lb-18).